Consider the following 407-residue polypeptide: Digeranylgeranylglycerophospholipid reductase (407 aa).

10 residues coordinate FAD: Ala-15, Glu-34, Cys-45, Ala-46, Gly-48, Arg-99, Ala-123, Asp-281, Gly-293, and Ile-294.

It belongs to the geranylgeranyl reductase family. DGGGPL reductase subfamily. It depends on FAD as a cofactor.

The enzyme catalyses a 2,3-bis-O-phytanyl-sn-glycerol 1-phospholipid + 8 oxidized 2[4Fe-4S]-[ferredoxin] = a 2,3-bis-O-(geranylgeranyl)-sn-glycerol 1-phospholipid + 8 reduced 2[4Fe-4S]-[ferredoxin] + 16 H(+). It carries out the reaction 2,3-bis-O-(phytanyl)-sn-glycerol 1-phosphate + 8 oxidized 2[4Fe-4S]-[ferredoxin] = 2,3-bis-O-(geranylgeranyl)-sn-glycerol 1-phosphate + 8 reduced 2[4Fe-4S]-[ferredoxin] + 16 H(+). It catalyses the reaction a 2,3-bis-O-phytanyl-sn-glycerol 1-phospholipid + 8 A = a 2,3-bis-O-(geranylgeranyl)-sn-glycerol 1-phospholipid + 8 AH2. The catalysed reaction is CDP-2,3-bis-O-(geranylgeranyl)-sn-glycerol + 8 AH2 = CDP-2,3-bis-O-(phytanyl)-sn-glycerol + 8 A. The enzyme catalyses archaetidylserine + 8 AH2 = 2,3-bis-O-phytanyl-sn-glycero-3-phospho-L-serine + 8 A. Its pathway is membrane lipid metabolism; glycerophospholipid metabolism. In terms of biological role, is involved in the reduction of 2,3-digeranylgeranylglycerophospholipids (unsaturated archaeols) into 2,3-diphytanylglycerophospholipids (saturated archaeols) in the biosynthesis of archaeal membrane lipids. Catalyzes the formation of archaetidic acid (2,3-di-O-phytanyl-sn-glyceryl phosphate) from 2,3-di-O-geranylgeranylglyceryl phosphate (DGGGP) via the hydrogenation of each double bond of the isoprenoid chains. Is also probably able to reduce double bonds of geranyl groups in CDP-2,3-bis-O-(geranylgeranyl)-sn-glycerol and archaetidylserine, thus acting at various stages in the biosynthesis of archaeal membrane lipids. The chain is Digeranylgeranylglycerophospholipid reductase from Methanosarcina mazei (strain ATCC BAA-159 / DSM 3647 / Goe1 / Go1 / JCM 11833 / OCM 88) (Methanosarcina frisia).